A 261-amino-acid chain; its full sequence is Pyridoxine-5'-phosphate oxidase (261 aa).

42 to 45 (RGDP) lines the pyridoxal 5'-phosphate pocket. Position 95–98 (95–98 (RMVL)) interacts with FMN. Lys100 lines the pyridoxal 5'-phosphate pocket. FMN contacts are provided by residues 110–111 (FT), 116–117 (RK), and Gln139. Positions 157, 161, and 165 each coordinate pyridoxal 5'-phosphate. Residues 174 to 175 (QS) and Trp219 each bind FMN. 225-227 (RLH) lines the pyridoxal 5'-phosphate pocket. Arg229 is a binding site for FMN. Phosphothreonine is present on Thr238. Residue Ser241 is modified to Phosphoserine.

The protein belongs to the pyridoxamine 5'-phosphate oxidase family. In terms of assembly, homodimer. Requires FMN as cofactor.

It carries out the reaction pyridoxamine 5'-phosphate + O2 + H2O = pyridoxal 5'-phosphate + H2O2 + NH4(+). The enzyme catalyses pyridoxine 5'-phosphate + O2 = pyridoxal 5'-phosphate + H2O2. The protein operates within cofactor metabolism; pyridoxal 5'-phosphate salvage; pyridoxal 5'-phosphate from pyridoxamine 5'-phosphate: step 1/1. Its pathway is cofactor metabolism; pyridoxal 5'-phosphate salvage; pyridoxal 5'-phosphate from pyridoxine 5'-phosphate: step 1/1. Functionally, catalyzes the oxidation of either pyridoxine 5'-phosphate (PNP) or pyridoxamine 5'-phosphate (PMP) into pyridoxal 5'-phosphate (PLP). The protein is Pyridoxine-5'-phosphate oxidase (PNPO) of Bos taurus (Bovine).